Consider the following 601-residue polypeptide: Oligoendopeptidase F homolog (601 aa).

H387 lines the Zn(2+) pocket. The active site involves E388. Zn(2+) contacts are provided by H391 and H394.

It belongs to the peptidase M3 family. Zn(2+) serves as cofactor.

In terms of biological role, hydrolyzes peptides containing between 7 and 17 amino acids with a rather wide specificity. This chain is Oligoendopeptidase F homolog (pepF), found in Lactococcus lactis subsp. lactis (strain IL1403) (Streptococcus lactis).